A 134-amino-acid chain; its full sequence is Interleukin-5 (134 aa).

The N-terminal stretch at 1–19 (MRMLLHLSLLALGASYMYA) is a signal peptide. A glycan (O-linked (GalNAc...) threonine) is linked at Thr22. Asn47 and Asn90 each carry an N-linked (GlcNAc...) asparagine glycan.

It belongs to the IL-5 family. In terms of assembly, homodimer; disulfide-linked. Interacts with IL5RA. Interacts with CSF2RB.

The protein resides in the secreted. Homodimeric cytokine expressed predominantly by T-lymphocytes and NK cells that plays an important role in the survival, differentiation, and chemotaxis of eosinophils. Also acts on activated and resting B-cells to induce immunoglobulin production, growth, and differentiation. Mechanistically, exerts its biological effects through a receptor composed of IL5RA subunit and the cytokine receptor common subunit beta/CSF2RB. Binding to the receptor leads to activation of various kinases including LYN, SYK and JAK2 and thereby propagates signals through the RAS-MAPK and JAK-STAT5 pathways respectively. The sequence is that of Interleukin-5 (IL5) from Cercocebus atys (Sooty mangabey).